Reading from the N-terminus, the 94-residue chain is Cell division protein FtsB (94 aa).

At 1 to 3 (MRA) the chain is on the cytoplasmic side. The helical transmembrane segment at 4–21 (FAVLLIIALGWLQYTLWF) threads the bilayer. Topologically, residues 22–94 (GKNGMEDYAQ…YRIIDENSEE (73 aa)) are periplasmic. Residues 40–60 (EEVNQGLRNRNGQMFAEIDDL) are a coiled coil.

This sequence belongs to the FtsB family. In terms of assembly, part of a complex composed of FtsB, FtsL and FtsQ.

The protein localises to the cell inner membrane. Its function is as follows. Essential cell division protein. May link together the upstream cell division proteins, which are predominantly cytoplasmic, with the downstream cell division proteins, which are predominantly periplasmic. The chain is Cell division protein FtsB from Aliivibrio salmonicida (strain LFI1238) (Vibrio salmonicida (strain LFI1238)).